Consider the following 232-residue polypeptide: RNA chaperone ProQ (232 aa).

The interval 105 to 182 (EAKARVQAQR…REEQHTPVSD (78 aa)) is disordered. Residues 117–136 (QQAKKREAAATAGEKEDAPR) show a composition bias toward basic and acidic residues. Basic residues predominate over residues 137 to 146 (RERKPRPTTP). Over residues 147–177 (RRKEGAERKPRAQKPVEKAPKTVKAPREEQH) the composition is skewed to basic and acidic residues.

It belongs to the ProQ family.

It is found in the cytoplasm. RNA chaperone with significant RNA binding, RNA strand exchange and RNA duplexing activities. May regulate ProP activity through an RNA-based, post-transcriptional mechanism. The sequence is that of RNA chaperone ProQ from Escherichia coli (strain K12).